Consider the following 630-residue polypeptide: Cytochrome B pre-mRNA-processing protein 2 (630 aa).

The protein localises to the mitochondrion. In terms of biological role, appears to be specifically required for the splicing of the terminal intron (bI5) of the cytochrome b pre-mRNA. Can also stimulates the splicing of the omega intron of the precursor of large ribosomal RNA. This chain is Cytochrome B pre-mRNA-processing protein 2 (CBP2), found in Saccharomyces paradoxus (Yeast).